A 31-amino-acid polypeptide reads, in one-letter code: Cyclotide vpub-A (31 aa).

Residues 1–31 constitute a cross-link (cyclopeptide (Gly-Asn)); the sequence is GVIPCGESCVFIPCISAVIGCSCKSKVCYRN. 3 disulfide bridges follow: C5–C21, C9–C23, and C14–C28.

The protein belongs to the cyclotide family. Bracelet subfamily. In terms of processing, this is a cyclic peptide.

Functionally, probably participates in a plant defense mechanism. This chain is Cyclotide vpub-A, found in Viola pubescens (Downy yellow violet).